A 364-amino-acid chain; its full sequence is Methylthioribose-1-phosphate isomerase (364 aa).

Substrate-binding positions include 46 to 48 (RGA), arginine 89, and glutamine 196. The active-site Proton donor is aspartate 237. 247–248 (NK) contributes to the substrate binding site.

It belongs to the eIF-2B alpha/beta/delta subunits family. MtnA subfamily.

The catalysed reaction is 5-(methylsulfanyl)-alpha-D-ribose 1-phosphate = 5-(methylsulfanyl)-D-ribulose 1-phosphate. Its pathway is amino-acid biosynthesis; L-methionine biosynthesis via salvage pathway; L-methionine from S-methyl-5-thio-alpha-D-ribose 1-phosphate: step 1/6. Its function is as follows. Catalyzes the interconversion of methylthioribose-1-phosphate (MTR-1-P) into methylthioribulose-1-phosphate (MTRu-1-P). This chain is Methylthioribose-1-phosphate isomerase, found in Pelotomaculum thermopropionicum (strain DSM 13744 / JCM 10971 / SI).